The primary structure comprises 373 residues: NK1 transcription factor-related protein 1 (373 aa).

Disordered regions lie at residues 49 to 74, 149 to 231, and 281 to 328; these read ALPAESRETSPRHEPVPAGAPPTVHR, SDFT…RRAR, and KWKK…SMHT. Basic and acidic residues predominate over residues 53–63; that stretch reads ESRETSPRHEP. A compositionally biased stretch (polar residues) spans 168–177; that stretch reads EESSALTGNN. A compositionally biased stretch (low complexity) spans 196 to 210; the sequence is GQQTQQSSSNGQNHQ. A DNA-binding region (homeobox) is located at residues 227-286; sequence PRRARTAFTYEQLVALENKFKSTRYLSVCERLNLALSLSLTETQVKIWFQNRRTKWKKQN. Over residues 296–310 the composition is skewed to gly residues; sequence SGGGGGNGPSNGLGG.

Belongs to the NK-1 homeobox family.

The protein localises to the nucleus. May participate in the energy homeostasis regulation. The polypeptide is NK1 transcription factor-related protein 1 (Danio rerio (Zebrafish)).